The following is a 286-amino-acid chain: Energy-coupling factor transporter ATP-binding protein EcfA2 (286 aa).

The 244-residue stretch at 3 to 246 folds into the ABC transporter domain; sequence IQFNQVSYIY…KTQLLKWHIE (244 aa). Residue 40 to 47 coordinates ATP; it reads GQTGSGKS.

Belongs to the ABC transporter superfamily. Energy-coupling factor EcfA family. As to quaternary structure, forms a stable energy-coupling factor (ECF) transporter complex composed of 2 membrane-embedded substrate-binding proteins (S component), 2 ATP-binding proteins (A component) and 2 transmembrane proteins (T component).

The protein resides in the cell membrane. In terms of biological role, ATP-binding (A) component of a common energy-coupling factor (ECF) ABC-transporter complex. Unlike classic ABC transporters this ECF transporter provides the energy necessary to transport a number of different substrates. The protein is Energy-coupling factor transporter ATP-binding protein EcfA2 of Staphylococcus epidermidis (strain ATCC 12228 / FDA PCI 1200).